Reading from the N-terminus, the 288-residue chain is MEIGLREWLIVIGIIVIAGILFDGWRRMRGGKGKLKFRLDRSLSNLPDEDTSAELLGPARVLDTHKEPQLDEHDLPSVSMPAREAREPRESGSKRGKRGGNGPAQGDLNLDLDLDGGPSFSSRDDDFVEPAAKSSPAVADKDQPQAEEVLVISVICRDPAGFKGPALLQNILESGLRFGEMDIFHRHESMAGNGEVLFSMANAVKPGIFDLDDIDHFSTPAVSFFLGLPGPRHPKQAFDVMVAAARKLSQELNGELKDDQRSVLTAQTIEHYRQRIVEFERRALTQKR.

Met-1 is a topological domain (periplasmic). A helical membrane pass occupies residues 2–22 (EIGLREWLIVIGIIVIAGILF). The Cytoplasmic segment spans residues 23-288 (DGWRRMRGGK…FERRALTQKR (266 aa)). Composition is skewed to basic and acidic residues over residues 66-75 (KEPQLDEHDL) and 83-93 (REAREPRESGS). A disordered region spans residues 66–141 (KEPQLDEHDL…AKSSPAVADK (76 aa)). Residues 106-117 (GDLNLDLDLDGG) show a composition bias toward low complexity.

The protein belongs to the ZipA family. As to quaternary structure, interacts with FtsZ via their C-terminal domains.

It is found in the cell inner membrane. Its function is as follows. Essential cell division protein that stabilizes the FtsZ protofilaments by cross-linking them and that serves as a cytoplasmic membrane anchor for the Z ring. Also required for the recruitment to the septal ring of downstream cell division proteins. This Pseudomonas fluorescens (strain Pf0-1) protein is Cell division protein ZipA.